A 363-amino-acid chain; its full sequence is DNA replication and repair protein RecF (363 aa).

Glycine 30–serine 37 contributes to the ATP binding site.

It belongs to the RecF family.

It localises to the cytoplasm. Functionally, the RecF protein is involved in DNA metabolism; it is required for DNA replication and normal SOS inducibility. RecF binds preferentially to single-stranded, linear DNA. It also seems to bind ATP. In Pseudoalteromonas atlantica (strain T6c / ATCC BAA-1087), this protein is DNA replication and repair protein RecF.